The primary structure comprises 1082 residues: Error-prone DNA polymerase (1082 aa).

Belongs to the DNA polymerase type-C family. DnaE2 subfamily.

The protein localises to the cytoplasm. It carries out the reaction DNA(n) + a 2'-deoxyribonucleoside 5'-triphosphate = DNA(n+1) + diphosphate. Functionally, DNA polymerase involved in damage-induced mutagenesis and translesion synthesis (TLS). It is not the major replicative DNA polymerase. The sequence is that of Error-prone DNA polymerase from Xanthomonas campestris pv. campestris (strain 8004).